Here is a 98-residue protein sequence, read N- to C-terminus: Feather keratin 3 (98 aa).

This sequence belongs to the avian keratin family. The avian keratins (F-ker, S-ker, C-ker and B-ker) are a complex mixture of very similar polypeptides.

In Gallus gallus (Chicken), this protein is Feather keratin 3.